The following is a 1749-amino-acid chain: Transposon Ty1-NL2 Gag-Pol polyprotein (1749 aa).

Composition is skewed to polar residues over residues 1-23, 48-60, 71-97, and 129-152; these read MESQQLSQHSPISHGSACASVTS, TKANSQQTTTPAS, SPQTAQSHSPQNGPYPQQCMMTQNQAN, and QFPQYPSSVGTPLSTPSPESGNTF. Disordered regions lie at residues 1–97, 129–171, and 352–421; these read MESQ…NQAN, QFPQ…YVRP, and GSRN…SKST. Positions 153 to 165 are enriched in low complexity; sequence TDSSSADSDMTST. An RNA-binding region spans residues 299-401; that stretch reads NNGIHINNKV…NSKSKTARAH (103 aa). Low complexity predominate over residues 402 to 418; the sequence is NVSTSNNSPSTDNDSIS. D461 acts as the For protease activity; shared with dimeric partner in catalysis. Residues 583–640 are integrase-type zinc finger-like; the sequence is NVHTSESTRKYPYPFIHRMLAHANAQTIRYSLKNNTITYFNESDVDWSSAIDYQCPDC. Positions 660–835 constitute an Integrase catalytic domain; the sequence is NSYEPFQYLH…AGLDISTLLP (176 aa). Residues D671 and D736 each contribute to the Mg(2+) site. The disordered stretch occupies residues 945–1166; it reads PRNVLSKAVS…LGGIGDSNAY (222 aa). The span at 954–963 shows a compositional bias: low complexity; it reads SPTDSTPPST. Positions 999-1009 are enriched in polar residues; sequence STPQISDIEST. The span at 1032 to 1047 shows a compositional bias: basic and acidic residues; it reads ESSHTSKSKDFRHSDS. Polar residues-rich tracts occupy residues 1048–1076 and 1089–1100; these read YSDNETNHTNVPISSTGGTNNKTVPQTSE and SIDTSSSESNSL. Positions 1172–1206 match the Bipartite nuclear localization signal motif; sequence KKRSLEDNETEIKVSRDTWNTKNMRSLEPPRSKKR. One can recognise a Reverse transcriptase Ty1/copia-type domain in the interval 1332–1470; it reads NNYYITQLDI…DILGLEIKYQ (139 aa). 6 residues coordinate Mg(2+): D1340, D1421, D1422, D1604, E1646, and D1679. The RNase H Ty1/copia-type domain maps to 1604–1746; it reads DASYGNQPYY…IKTFKLLTNK (143 aa).

As to quaternary structure, the capsid protein forms a homotrimer, from which the VLPs are assembled. The protease is a homodimer, whose active site consists of two apposed aspartic acid residues. Post-translationally, initially, virus-like particles (VLPs) are composed of the structural unprocessed proteins Gag and Gag-Pol, and also contain the host initiator methionine tRNA (tRNA(i)-Met) which serves as a primer for minus-strand DNA synthesis, and a dimer of genomic Ty RNA. Processing of the polyproteins occurs within the particle and proceeds by an ordered pathway, called maturation. First, the protease (PR) is released by autocatalytic cleavage of the Gag-Pol polyprotein yielding capsid protein p45 and a Pol-p154 precursor protein. This cleavage is a prerequisite for subsequent processing of Pol-p154 at the remaining sites to release the mature structural and catalytic proteins. Maturation takes place prior to the RT reaction and is required to produce transposition-competent VLPs.

The protein localises to the cytoplasm. Its subcellular location is the nucleus. It catalyses the reaction DNA(n) + a 2'-deoxyribonucleoside 5'-triphosphate = DNA(n+1) + diphosphate. The catalysed reaction is Endonucleolytic cleavage to 5'-phosphomonoester.. Its function is as follows. Capsid protein (CA) is the structural component of the virus-like particle (VLP), forming the shell that encapsulates the retrotransposons dimeric RNA genome. The particles are assembled from trimer-clustered units and there are holes in the capsid shells that allow for the diffusion of macromolecules. CA also has nucleocapsid-like chaperone activity, promoting primer tRNA(i)-Met annealing to the multipartite primer-binding site (PBS), dimerization of Ty1 RNA and initiation of reverse transcription. The aspartyl protease (PR) mediates the proteolytic cleavages of the Gag and Gag-Pol polyproteins after assembly of the VLP. In terms of biological role, reverse transcriptase/ribonuclease H (RT) is a multifunctional enzyme that catalyzes the conversion of the retro-elements RNA genome into dsDNA within the VLP. The enzyme displays a DNA polymerase activity that can copy either DNA or RNA templates, and a ribonuclease H (RNase H) activity that cleaves the RNA strand of RNA-DNA heteroduplexes during plus-strand synthesis and hydrolyzes RNA primers. The conversion leads to a linear dsDNA copy of the retrotransposon that includes long terminal repeats (LTRs) at both ends. Functionally, integrase (IN) targets the VLP to the nucleus, where a subparticle preintegration complex (PIC) containing at least integrase and the newly synthesized dsDNA copy of the retrotransposon must transit the nuclear membrane. Once in the nucleus, integrase performs the integration of the dsDNA into the host genome. The protein is Transposon Ty1-NL2 Gag-Pol polyprotein (TY1B-NL2) of Saccharomyces cerevisiae (strain ATCC 204508 / S288c) (Baker's yeast).